The primary structure comprises 835 residues: Leucine--tRNA ligase (835 aa).

The short motif at 36–46 (PYPSGKIHVGH) is the 'HIGH' region element. Residues 602–606 (KMSKS) carry the 'KMSKS' region motif. Residue K605 coordinates ATP.

This sequence belongs to the class-I aminoacyl-tRNA synthetase family.

It localises to the cytoplasm. The catalysed reaction is tRNA(Leu) + L-leucine + ATP = L-leucyl-tRNA(Leu) + AMP + diphosphate. The polypeptide is Leucine--tRNA ligase (Rickettsia rickettsii (strain Iowa)).